The primary structure comprises 129 residues: Small ribosomal subunit protein uS8 (129 aa).

Belongs to the universal ribosomal protein uS8 family. As to quaternary structure, part of the 30S ribosomal subunit. Contacts proteins S5 and S12.

One of the primary rRNA binding proteins, it binds directly to 16S rRNA central domain where it helps coordinate assembly of the platform of the 30S subunit. The protein is Small ribosomal subunit protein uS8 of Colwellia psychrerythraea (strain 34H / ATCC BAA-681) (Vibrio psychroerythus).